The following is a 430-amino-acid chain: Enolase (430 aa).

Q163 provides a ligand contact to (2R)-2-phosphoglycerate. The Proton donor role is filled by E205. Residues D242, E287, and D314 each contribute to the Mg(2+) site. K339, R368, S369, and K390 together coordinate (2R)-2-phosphoglycerate. K339 functions as the Proton acceptor in the catalytic mechanism.

The protein belongs to the enolase family. The cofactor is Mg(2+).

It localises to the cytoplasm. It is found in the secreted. The protein localises to the cell surface. It catalyses the reaction (2R)-2-phosphoglycerate = phosphoenolpyruvate + H2O. It participates in carbohydrate degradation; glycolysis; pyruvate from D-glyceraldehyde 3-phosphate: step 4/5. Functionally, catalyzes the reversible conversion of 2-phosphoglycerate (2-PG) into phosphoenolpyruvate (PEP). It is essential for the degradation of carbohydrates via glycolysis. This is Enolase from Exiguobacterium sibiricum (strain DSM 17290 / CCUG 55495 / CIP 109462 / JCM 13490 / 255-15).